A 291-amino-acid polypeptide reads, in one-letter code: NAD kinase (291 aa).

The Proton acceptor role is filled by D73. NAD(+)-binding positions include D73–G74, N147–D148, R175, D177, T188–S193, A212, and Q246.

It belongs to the NAD kinase family. A divalent metal cation serves as cofactor.

It localises to the cytoplasm. The enzyme catalyses NAD(+) + ATP = ADP + NADP(+) + H(+). In terms of biological role, involved in the regulation of the intracellular balance of NAD and NADP, and is a key enzyme in the biosynthesis of NADP. Catalyzes specifically the phosphorylation on 2'-hydroxyl of the adenosine moiety of NAD to yield NADP. This Polaromonas sp. (strain JS666 / ATCC BAA-500) protein is NAD kinase.